The sequence spans 492 residues: Glutamyl-tRNA(Gln) amidotransferase subunit A (492 aa).

Residues lysine 78 and serine 158 each act as charge relay system in the active site. Catalysis depends on serine 182, which acts as the Acyl-ester intermediate.

The protein belongs to the amidase family. GatA subfamily. In terms of assembly, heterotrimer of A, B and C subunits.

It catalyses the reaction L-glutamyl-tRNA(Gln) + L-glutamine + ATP + H2O = L-glutaminyl-tRNA(Gln) + L-glutamate + ADP + phosphate + H(+). Functionally, allows the formation of correctly charged Gln-tRNA(Gln) through the transamidation of misacylated Glu-tRNA(Gln) in organisms which lack glutaminyl-tRNA synthetase. The reaction takes place in the presence of glutamine and ATP through an activated gamma-phospho-Glu-tRNA(Gln). This chain is Glutamyl-tRNA(Gln) amidotransferase subunit A, found in Rhodopseudomonas palustris (strain HaA2).